A 220-amino-acid polypeptide reads, in one-letter code: Translation initiation factor IF-3 (220 aa).

Residues Thr182–Gly220 are disordered. Residues Val185–Ala194 show a composition bias toward basic and acidic residues.

Belongs to the IF-3 family. In terms of assembly, monomer.

The protein localises to the cytoplasm. Its function is as follows. IF-3 binds to the 30S ribosomal subunit and shifts the equilibrium between 70S ribosomes and their 50S and 30S subunits in favor of the free subunits, thus enhancing the availability of 30S subunits on which protein synthesis initiation begins. This chain is Translation initiation factor IF-3, found in Synechococcus sp. (strain WH7803).